The sequence spans 365 residues: Chorismate synthase (365 aa).

NADP(+) contacts are provided by Arg48 and Arg54. FMN contacts are provided by residues 125–127 (RSS), 238–239 (NA), Ala278, 293–297 (KPTSS), and Arg319.

Belongs to the chorismate synthase family. Homotetramer. FMNH2 serves as cofactor.

The catalysed reaction is 5-O-(1-carboxyvinyl)-3-phosphoshikimate = chorismate + phosphate. It functions in the pathway metabolic intermediate biosynthesis; chorismate biosynthesis; chorismate from D-erythrose 4-phosphate and phosphoenolpyruvate: step 7/7. Functionally, catalyzes the anti-1,4-elimination of the C-3 phosphate and the C-6 proR hydrogen from 5-enolpyruvylshikimate-3-phosphate (EPSP) to yield chorismate, which is the branch point compound that serves as the starting substrate for the three terminal pathways of aromatic amino acid biosynthesis. This reaction introduces a second double bond into the aromatic ring system. In Pseudoalteromonas translucida (strain TAC 125), this protein is Chorismate synthase.